The sequence spans 179 residues: Large ribosomal subunit protein uL5 (179 aa).

The protein belongs to the universal ribosomal protein uL5 family. As to quaternary structure, part of the 50S ribosomal subunit; part of the 5S rRNA/L5/L18/L25 subcomplex. Contacts the 5S rRNA and the P site tRNA. Forms a bridge to the 30S subunit in the 70S ribosome.

Its function is as follows. This is one of the proteins that bind and probably mediate the attachment of the 5S RNA into the large ribosomal subunit, where it forms part of the central protuberance. In the 70S ribosome it contacts protein S13 of the 30S subunit (bridge B1b), connecting the 2 subunits; this bridge is implicated in subunit movement. Contacts the P site tRNA; the 5S rRNA and some of its associated proteins might help stabilize positioning of ribosome-bound tRNAs. This Shewanella amazonensis (strain ATCC BAA-1098 / SB2B) protein is Large ribosomal subunit protein uL5.